The sequence spans 519 residues: Glutamate--cysteine ligase (519 aa).

This sequence belongs to the glutamate--cysteine ligase type 1 family. Type 1 subfamily.

The catalysed reaction is L-cysteine + L-glutamate + ATP = gamma-L-glutamyl-L-cysteine + ADP + phosphate + H(+). It functions in the pathway sulfur metabolism; glutathione biosynthesis; glutathione from L-cysteine and L-glutamate: step 1/2. This Yersinia pseudotuberculosis serotype I (strain IP32953) protein is Glutamate--cysteine ligase.